The following is a 66-amino-acid chain: Alpha-actitoxin-Ms11a-2 (66 aa).

An N-terminal signal peptide occupies residues 1-24; it reads MASKIFFVLAVFLVMSAVLPESFA. 3 disulfide bridges follow: Cys26-Cys41, Cys33-Cys46, and Cys40-Cys61.

It is found in the secreted. The protein resides in the nematocyst. Alpha-toxins act on postsynaptic membranes, they bind to the nicotinic acetylcholine receptors (nAChR) and thus inhibit them. This toxin competes with alpha-bungarotoxin for binding to orthosteric sites on muscle-type T.carlifornicus (IC(50)=1080 nM) and human alpha-7/CHRNA7 nAChRs (IC(50)=14.13 uM). This Metridium senile (Brown sea anemone) protein is Alpha-actitoxin-Ms11a-2.